The chain runs to 120 residues: Large ribosomal subunit protein uL18 (120 aa).

Residues Met1–Leu20 are compositionally biased toward basic residues. Residues Met1–Arg26 are disordered.

This sequence belongs to the universal ribosomal protein uL18 family. As to quaternary structure, part of the 50S ribosomal subunit; part of the 5S rRNA/L5/L18/L25 subcomplex. Contacts the 5S and 23S rRNAs.

Functionally, this is one of the proteins that bind and probably mediate the attachment of the 5S RNA into the large ribosomal subunit, where it forms part of the central protuberance. The chain is Large ribosomal subunit protein uL18 from Synechocystis sp. (strain ATCC 27184 / PCC 6803 / Kazusa).